The chain runs to 457 residues: UDP-N-acetylmuramate--L-alanine ligase (457 aa).

An ATP-binding site is contributed by Gly118–Thr124.

Belongs to the MurCDEF family.

It localises to the cytoplasm. The enzyme catalyses UDP-N-acetyl-alpha-D-muramate + L-alanine + ATP = UDP-N-acetyl-alpha-D-muramoyl-L-alanine + ADP + phosphate + H(+). It participates in cell wall biogenesis; peptidoglycan biosynthesis. Functionally, cell wall formation. The polypeptide is UDP-N-acetylmuramate--L-alanine ligase (Clostridium perfringens (strain 13 / Type A)).